A 507-amino-acid polypeptide reads, in one-letter code: Hexokinase-5 (507 aa).

A helical transmembrane segment spans residues 4–24; sequence AAAVGTAVVVAAAVGVAVVLA. Residues 44–498 form the Hexokinase domain; the sequence is RKVAAVIEDV…SGIGAALLAA (455 aa). The tract at residues 99 to 237 is hexokinase small subdomain; sequence TGNEQGLFYA…GLDMKIAALV (139 aa). ADP contacts are provided by G113, T114, and N115. Residues T203, K204, N238, and D239 each contribute to the D-glucose site. The tract at residues 238-487 is hexokinase large subdomain; sequence NDTVGTLAGG…SSVVTKLAND (250 aa). T262 contributes to the ADP binding site. 3 residues coordinate D-glucose: N265, E293, and E324. G452 contacts ADP.

Belongs to the hexokinase family. Expressed in roots, leaves, flowers, immature seeds, endosperm and seed coat.

It is found in the plastid. Its subcellular location is the chloroplast outer membrane. It carries out the reaction a D-hexose + ATP = a D-hexose 6-phosphate + ADP + H(+). The enzyme catalyses D-fructose + ATP = D-fructose 6-phosphate + ADP + H(+). The catalysed reaction is D-glucose + ATP = D-glucose 6-phosphate + ADP + H(+). The protein operates within carbohydrate metabolism; hexose metabolism. It functions in the pathway carbohydrate degradation; glycolysis; D-glyceraldehyde 3-phosphate and glycerone phosphate from D-glucose: step 1/4. Functionally, fructose and glucose phosphorylating enzyme. Functions as a glucose sensor for plant growth and photosynthesis. Is essential for pollen development, germination, and tube growth. Its activity is necessary for the starch utilization pathway during pollen germination and tube growth, as well as for starch biosynthesis during pollen maturation. This chain is Hexokinase-5 (HXK5), found in Oryza sativa subsp. japonica (Rice).